The sequence spans 473 residues: Keratin, type I cytoskeletal 16 (473 aa).

The tract at residues 1 to 116 (MTTCSRQFTS…AGGDGLLVGS (116 aa)) is head. Positions 117-152 (EKVTMQNLNDRLASYLDKVRALEEANADLEVKIRDW) are coil 1A. An IF rod domain is found at 117 to 428 (EKVTMQNLND…RLLEGEDAHL (312 aa)). The linker 1 stretch occupies residues 153–170 (YQRQRPSEIKDYSPYFKT). The coil 1B stretch occupies residues 171–262 (IEDLRNKIIA…KNHEEEMLAL (92 aa)). The tract at residues 263–285 (RGQTGGDVNVEMDAAPGVDLSRI) is linker 12. A coil 2 region spans residues 286–424 (LNEMRDQYEQ…ATYRRLLEGE (139 aa)). A tail region spans residues 425-473 (DAHLSSQQASGQSYSSREVFTSSSSSSSRQTRPILKEQSSSSFSQGQSS). The disordered stretch occupies residues 428-473 (LSSQQASGQSYSSREVFTSSSSSSSRQTRPILKEQSSSSFSQGQSS). 2 stretches are compositionally biased toward low complexity: residues 429-452 (SSQQ…SSSS) and 462-473 (QSSSSFSQGQSS).

Belongs to the intermediate filament family. Heterodimer of a type I and a type II keratin. KRT16 associates with KRT6 isomers (KRT6A or KRT6B). Interacts with TCHP. Interacts with TRADD. In terms of tissue distribution, expressed in the corneal epithelium (at protein level).

Its function is as follows. Epidermis-specific type I keratin that plays a key role in skin. Acts as a regulator of innate immunity in response to skin barrier breach: required for some inflammatory checkpoint for the skin barrier maintenance. The sequence is that of Keratin, type I cytoskeletal 16 (KRT16) from Homo sapiens (Human).